Consider the following 506-residue polypeptide: Ribose import ATP-binding protein RbsA (506 aa).

ABC transporter domains follow at residues 5–237 and 249–492; these read VQLI…VGRP and PFGA…LAIE. Residue 37 to 44 coordinates ATP; that stretch reads GENGAGKS.

Belongs to the ABC transporter superfamily. Ribose importer (TC 3.A.1.2.1) family. The complex is composed of an ATP-binding protein (RbsA), two transmembrane proteins (RbsC) and a solute-binding protein (RbsB).

It localises to the cell inner membrane. The catalysed reaction is D-ribose(out) + ATP + H2O = D-ribose(in) + ADP + phosphate + H(+). Its function is as follows. Part of the ABC transporter complex RbsABC involved in ribose import. Responsible for energy coupling to the transport system. In Chelativorans sp. (strain BNC1), this protein is Ribose import ATP-binding protein RbsA.